Consider the following 382-residue polypeptide: Chaperone protein DnaJ (382 aa).

Residues 6–70 (DYYEILGLPK…EKRAQYDRFG (65 aa)) form the J domain. The CR-type zinc finger occupies 131–213 (GVRKDIDIPR…CGGAGRVRNK (83 aa)). The Zn(2+) site is built by C144, C147, C161, C164, C187, C190, C201, and C204. CXXCXGXG motif repeat units lie at residues 144-151 (CSTCSGTG), 161-168 (CPTCGGTG), 187-194 (CSTCHGRG), and 201-208 (CPVCGGAG). The tract at residues 146 to 168 (TCSGTGAKPGTSPKRCPTCGGTG) is disordered. The disordered stretch occupies residues 348-382 (FENLSKGKKPQEEEKSKAEKHKKGIFEKVKDAFES). Basic and acidic residues predominate over residues 371–382 (GIFEKVKDAFES).

Belongs to the DnaJ family. Homodimer. It depends on Zn(2+) as a cofactor.

The protein localises to the cytoplasm. Its function is as follows. Participates actively in the response to hyperosmotic and heat shock by preventing the aggregation of stress-denatured proteins and by disaggregating proteins, also in an autonomous, DnaK-independent fashion. Unfolded proteins bind initially to DnaJ; upon interaction with the DnaJ-bound protein, DnaK hydrolyzes its bound ATP, resulting in the formation of a stable complex. GrpE releases ADP from DnaK; ATP binding to DnaK triggers the release of the substrate protein, thus completing the reaction cycle. Several rounds of ATP-dependent interactions between DnaJ, DnaK and GrpE are required for fully efficient folding. Also involved, together with DnaK and GrpE, in the DNA replication of plasmids through activation of initiation proteins. This Methanosarcina acetivorans (strain ATCC 35395 / DSM 2834 / JCM 12185 / C2A) protein is Chaperone protein DnaJ.